The chain runs to 120 residues: NADH dehydrogenase [ubiquinone] 1 subunit C2 (120 aa).

At Met-1 the chain carries N-acetylmethionine. A helical membrane pass occupies residues 57–76 (GLHRQLLYITSFVFVGYYLL).

It belongs to the complex I NDUFC2 subunit family. In terms of assembly, complex I is composed of 45 different subunits. Interacts with TMEM242. In terms of processing, there is a minor unacetylated form of subunit B14.5b.

The protein localises to the mitochondrion inner membrane. Its function is as follows. Accessory subunit of the mitochondrial membrane respiratory chain NADH dehydrogenase (Complex I), that is believed not to be involved in catalysis but required for the complex assembly. Complex I functions in the transfer of electrons from NADH to the respiratory chain. The immediate electron acceptor for the enzyme is believed to be ubiquinone. This is NADH dehydrogenase [ubiquinone] 1 subunit C2 from Bos taurus (Bovine).